The primary structure comprises 249 residues: GTP cyclohydrolase 1 type 2 homolog (249 aa).

A divalent metal cation is bound by residues H64, H65, D102, H217, and E221.

It belongs to the GTP cyclohydrolase I type 2/NIF3 family. Homohexamer.

The polypeptide is GTP cyclohydrolase 1 type 2 homolog (Neisseria meningitidis serogroup A / serotype 4A (strain DSM 15465 / Z2491)).